Consider the following 307-residue polypeptide: uncharacterized protein (307 aa).

Residues 11–68 enclose the HTH lysR-type domain; that stretch reads IRLRHLHTFVAVAQQGTLGRAAETLNLSQPALSKTLNELEQLTGARLFERGRQGAQLT. The segment at residues 28-47 is a DNA-binding region (H-T-H motif); that stretch reads LGRAAETLNLSQPALSKTLN.

The protein belongs to the LysR transcriptional regulatory family.

This is an uncharacterized protein from Escherichia coli (strain K12).